Consider the following 436-residue polypeptide: MLNSSGVRTQRRSPRPLSLGGRKIITPTKFAYDHHNPDKVLDFVEMDCLEPKTKNNLTGKLLLVASLLILAIIVISQSSSFTSPSAFSQREEGVTHVLVTGGAGYIGSHAALRLLRDSYRVTIVDNLSRGNLGAVKTLQQLFPQTGRLQFIYADLGDPLAVEKIFSENAFDAVMHFAAVAYVGESTLYPLKYYHNITSNTLGVLEAMARHKVKKLIYSSTCATYGEPEKMPITEDTPQVPINPYGKAKKMAEDMILDFSKNSDMAVMILRYFNVIGSDPGGRLGEAPRPELREQGRISGACFDAARGFIPGLQVKGTDYKTSDGTCIRDYIDVTDLVDAHVKALEKAQPRKVGIYNVGTGKGRSVKEFVEACKKATGVEIKVDFLPRRPGDYAEVYSDPTKILKDLNWTARFTNLQDSLQVAWRWQKIHPHGYNSY.

The segment at 1 to 20 (MLNSSGVRTQRRSPRPLSLG) is disordered. The Cytoplasmic portion of the chain corresponds to 1–60 (MLNSSGVRTQRRSPRPLSLGGRKIITPTKFAYDHHNPDKVLDFVEMDCLEPKTKNNLTGK). The chain crosses the membrane as a helical; Signal-anchor for type II membrane protein span at residues 61 to 81 (LLLVASLLILAIIVISQSSSF). Topologically, residues 82–436 (TSPSAFSQRE…KIHPHGYNSY (355 aa)) are lumenal. An NAD(+)-binding site is contributed by 96–127 (HVLVTGGAGYIGSHAALRLLRDSYRVTIVDNL). The Proton acceptor role is filled by Y244.

Belongs to the NAD(P)-dependent epimerase/dehydratase family. The cofactor is NAD(+).

It localises to the golgi apparatus. Its subcellular location is the golgi stack membrane. It carries out the reaction UDP-beta-L-arabinopyranose = UDP-alpha-D-xylose. It participates in nucleotide-sugar biosynthesis; UDP-L-arabinose biosynthesis; UDP-L-arabinose from UDP-alpha-D-xylose: step 1/1. The protein operates within cell wall biogenesis; cell wall polysaccharide biosynthesis. The sequence is that of Putative UDP-arabinose 4-epimerase 4 from Arabidopsis thaliana (Mouse-ear cress).